Here is an 89-residue protein sequence, read N- to C-terminus: Small ribosomal subunit protein uS15 (89 aa).

The protein belongs to the universal ribosomal protein uS15 family. In terms of assembly, part of the 30S ribosomal subunit. Forms a bridge to the 50S subunit in the 70S ribosome, contacting the 23S rRNA.

Its function is as follows. One of the primary rRNA binding proteins, it binds directly to 16S rRNA where it helps nucleate assembly of the platform of the 30S subunit by binding and bridging several RNA helices of the 16S rRNA. In terms of biological role, forms an intersubunit bridge (bridge B4) with the 23S rRNA of the 50S subunit in the ribosome. This chain is Small ribosomal subunit protein uS15, found in Cereibacter sphaeroides (strain ATCC 17025 / ATH 2.4.3) (Rhodobacter sphaeroides).